The chain runs to 79 residues: Putative membrane protein insertion efficiency factor (79 aa).

Belongs to the UPF0161 family.

The protein resides in the cell inner membrane. In terms of biological role, could be involved in insertion of integral membrane proteins into the membrane. The protein is Putative membrane protein insertion efficiency factor of Prochlorococcus marinus (strain SARG / CCMP1375 / SS120).